Consider the following 363-residue polypeptide: NAD(P)H-quinone oxidoreductase subunit 1, chloroplastic (363 aa).

6 helical membrane passes run 27 to 47 (IWLL…VLVI), 98 to 118 (FSIG…VIPF), 127 to 147 (LSIG…GLLM), 248 to 268 (YSGI…LVSS), 300 to 320 (VFGT…FLFI), and 336 to 356 (LLNL…LLTT).

It belongs to the complex I subunit 1 family. In terms of assembly, NDH is composed of at least 16 different subunits, 5 of which are encoded in the nucleus.

The protein localises to the plastid. It is found in the chloroplast thylakoid membrane. It catalyses the reaction a plastoquinone + NADH + (n+1) H(+)(in) = a plastoquinol + NAD(+) + n H(+)(out). The enzyme catalyses a plastoquinone + NADPH + (n+1) H(+)(in) = a plastoquinol + NADP(+) + n H(+)(out). In terms of biological role, NDH shuttles electrons from NAD(P)H:plastoquinone, via FMN and iron-sulfur (Fe-S) centers, to quinones in the photosynthetic chain and possibly in a chloroplast respiratory chain. The immediate electron acceptor for the enzyme in this species is believed to be plastoquinone. Couples the redox reaction to proton translocation, and thus conserves the redox energy in a proton gradient. In Platanus occidentalis (Sycamore), this protein is NAD(P)H-quinone oxidoreductase subunit 1, chloroplastic.